A 636-amino-acid chain; its full sequence is Bifunctional phosphonoacetaldehyde hydrolase/aminoethylphosphonate transaminase (636 aa).

Residues 1 to 276 (MKKIYGEKIK…IKSDFVPEND (276 aa)) form a phosphonoacetaldehyde hydrolase region. The Nucleophile role is filled by D15. Residues D15 and A17 each coordinate Mg(2+). The Schiff-base intermediate with substrate role is filled by K56. Residue D189 coordinates Mg(2+). The interval 277-636 (YILLTPGPLS…ADVIEKFINR (360 aa)) is 2-aminoethylphosphonate--pyruvate transaminase. K465 bears the N6-(pyridoxal phosphate)lysine mark.

It in the N-terminal section; belongs to the HAD-like hydrolase superfamily. PhnX family. In the C-terminal section; belongs to the class-V pyridoxal-phosphate-dependent aminotransferase family. PhnW subfamily. In terms of assembly, homodimer. It depends on Mg(2+) as a cofactor. The cofactor is pyridoxal 5'-phosphate.

The enzyme catalyses (2-aminoethyl)phosphonate + pyruvate = phosphonoacetaldehyde + L-alanine. It carries out the reaction phosphonoacetaldehyde + H2O = acetaldehyde + phosphate + H(+). In terms of biological role, involved in phosphonate degradation. In Clostridioides difficile (strain 630) (Peptoclostridium difficile), this protein is Bifunctional phosphonoacetaldehyde hydrolase/aminoethylphosphonate transaminase (phnXW).